A 421-amino-acid polypeptide reads, in one-letter code: Acyl-coenzyme A thioesterase 1 (421 aa).

Residues S232, D326, and H360 each act as charge relay system in the active site.

This sequence belongs to the C/M/P thioester hydrolase family. As to quaternary structure, monomer.

The protein resides in the cytoplasm. Its subcellular location is the cytosol. It catalyses the reaction hexadecanoyl-CoA + H2O = hexadecanoate + CoA + H(+). It carries out the reaction decanoyl-CoA + H2O = decanoate + CoA + H(+). The enzyme catalyses dodecanoyl-CoA + H2O = dodecanoate + CoA + H(+). The catalysed reaction is tetradecanoyl-CoA + H2O = tetradecanoate + CoA + H(+). It catalyses the reaction octadecanoyl-CoA + H2O = octadecanoate + CoA + H(+). It carries out the reaction eicosanoyl-CoA + H2O = eicosanoate + CoA + H(+). The enzyme catalyses (9Z)-octadecenoyl-CoA + H2O = (9Z)-octadecenoate + CoA + H(+). The catalysed reaction is (9Z)-hexadecenoyl-CoA + H2O = (9Z)-hexadecenoate + CoA + H(+). It catalyses the reaction (9E)-octadecenoyl-CoA + H2O = (9E)-octadecenoate + CoA + H(+). It participates in lipid metabolism; fatty acid metabolism. In terms of biological role, catalyzes the hydrolysis of acyl-CoAs into free fatty acids and coenzyme A (CoASH), regulating their respective intracellular levels. More active towards saturated and unsaturated long chain fatty acyl-CoAs (C12-C20). This chain is Acyl-coenzyme A thioesterase 1 (ACOT1), found in Homo sapiens (Human).